Consider the following 505-residue polypeptide: Endoglucanase 5 (505 aa).

The signal sequence occupies residues 1–31 (MWMRRNQIVRKLTLGVVTTVLGMSLSFSALS). The tract at residues 32–334 (ATPVETHGQL…REQIRAGANL (303 aa)) is catalytic. Substrate is bound by residues His-64, 68–69 (WF), Tyr-95, and His-130. Glu-168 serves as the catalytic Proton donor. Tyr-230 lines the substrate pocket. Glu-256 acts as the Nucleophile in catalysis. Residues 262–263 (AS), Trp-290, and 295–297 (KSE) contribute to the substrate site. Residues 332 to 355 (ANLGGGDTPTTPTEPTNPGNGTTG) are disordered. The linker stretch occupies residues 335–352 (GGGDTPTTPTEPTNPGNG). Positions 339-355 (TPTTPTEPTNPGNGTTG) are enriched in low complexity. The region spanning 353–505 (TTGDVVLQYR…KGTLVWGVEP (153 aa)) is the CBM3 domain.

Belongs to the glycosyl hydrolase 5 (cellulase A) family.

The protein resides in the secreted. The enzyme catalyses Endohydrolysis of (1-&gt;4)-beta-D-glucosidic linkages in cellulose, lichenin and cereal beta-D-glucans.. In terms of biological role, endoglucanase with some exoglucanase activity. In Pectobacterium carotovorum subsp. carotovorum (Erwinia carotovora subsp. carotovora), this protein is Endoglucanase 5 (celV).